Consider the following 424-residue polypeptide: Serine hydroxymethyltransferase (424 aa).

Residues Leu-118 and Gly-122–Leu-124 each bind (6S)-5,6,7,8-tetrahydrofolate. Lys-227 bears the N6-(pyridoxal phosphate)lysine mark. Ser-351–Phe-353 is a (6S)-5,6,7,8-tetrahydrofolate binding site.

It belongs to the SHMT family. Homodimer. Pyridoxal 5'-phosphate serves as cofactor.

It is found in the cytoplasm. The catalysed reaction is (6R)-5,10-methylene-5,6,7,8-tetrahydrofolate + glycine + H2O = (6S)-5,6,7,8-tetrahydrofolate + L-serine. Its pathway is one-carbon metabolism; tetrahydrofolate interconversion. It functions in the pathway amino-acid biosynthesis; glycine biosynthesis; glycine from L-serine: step 1/1. Its function is as follows. Catalyzes the reversible interconversion of serine and glycine with tetrahydrofolate (THF) serving as the one-carbon carrier. This reaction serves as the major source of one-carbon groups required for the biosynthesis of purines, thymidylate, methionine, and other important biomolecules. Also exhibits THF-independent aldolase activity toward beta-hydroxyamino acids, producing glycine and aldehydes, via a retro-aldol mechanism. This is Serine hydroxymethyltransferase from Thermosipho melanesiensis (strain DSM 12029 / CIP 104789 / BI429).